Consider the following 46-residue polypeptide: Diuretic hormone class 1 (46 aa).

The residue at position 46 (Ile-46) is an Isoleucine amide.

It localises to the secreted. In terms of biological role, regulation of fluid secretion. Stimulates primary urine secretion by Malpighian tubules and causes a dose-dependent stimulation of cAMP levels in the tubules. Has a greater effect on the transport of Na(+) then K(+) ions. In vitro, has synergistic effects with the smaller diuretic hormone DH(31) which co-occurs with it. This Diploptera punctata (Pacific beetle cockroach) protein is Diuretic hormone class 1.